The following is a 114-amino-acid chain: As-peptide 126 (114 aa).

The N-terminal stretch at 1-22 (MSRALICSLALLAMLVISGTYA) is a signal peptide. 9 repeat units span residues 22–29 (ASPAANAE), 30–37 (ALAAANAE), 38–45 (ASAAANAE), 46–53 (PLAAANAE), 54–61 (PLAAANAE), 62–69 (PLAAANAD), 70–77 (PIAAANAE), 78–85 (PSAAANAE), and 86–93 (PLAAANAE). Residues 22–93 (ASPAANAEAL…AEPLAAANAE (72 aa)) form a 9 X 8 AA approximate tandem repeats of [AP]-[ILS]-[AP]-A-A-N-A-[DE] region. Residues 23-104 (SPAANAEALA…SAGPSPLAAA (82 aa)) constitute a propeptide that is removed on maturation. Over residues 82-96 (ANAEPLAAANAEPSA) the composition is skewed to low complexity. A disordered region spans residues 82–114 (ANAEPLAAANAEPSAGPSPLAAAQDPPVVKMKG). Pyrrolidone carboxylic acid is present on Gln-105. Position 113 is a lysine amide (Lys-113).

Expressed by the venom gland.

The protein localises to the secreted. The protein is As-peptide 126 of Anoplius samariensis (Solitary wasp).